Here is a 257-residue protein sequence, read N- to C-terminus: Type III pantothenate kinase (257 aa).

6 to 13 (DCGNTNTV) contributes to the ATP binding site. Position 107 to 110 (107 to 110 (GPDR)) interacts with substrate. Residue Asp109 is the Proton acceptor of the active site. Asp129 contacts K(+). Residue Thr132 participates in ATP binding. Residue Thr184 coordinates substrate.

Belongs to the type III pantothenate kinase family. In terms of assembly, homodimer. The cofactor is NH4(+). K(+) serves as cofactor.

The protein resides in the cytoplasm. It catalyses the reaction (R)-pantothenate + ATP = (R)-4'-phosphopantothenate + ADP + H(+). The protein operates within cofactor biosynthesis; coenzyme A biosynthesis; CoA from (R)-pantothenate: step 1/5. Catalyzes the phosphorylation of pantothenate (Pan), the first step in CoA biosynthesis. The protein is Type III pantothenate kinase of Roseobacter denitrificans (strain ATCC 33942 / OCh 114) (Erythrobacter sp. (strain OCh 114)).